Reading from the N-terminus, the 304-residue chain is Homoserine kinase (304 aa).

91–101 provides a ligand contact to ATP; it reads PLGKGMGSSAA.

This sequence belongs to the GHMP kinase family. Homoserine kinase subfamily.

It is found in the cytoplasm. The catalysed reaction is L-homoserine + ATP = O-phospho-L-homoserine + ADP + H(+). It participates in amino-acid biosynthesis; L-threonine biosynthesis; L-threonine from L-aspartate: step 4/5. Its function is as follows. Catalyzes the ATP-dependent phosphorylation of L-homoserine to L-homoserine phosphate. The protein is Homoserine kinase of Solibacter usitatus (strain Ellin6076).